The primary structure comprises 446 residues: NAD(P)H sulfur oxidoreductase (CoA-dependent) (446 aa).

17-18 serves as a coordination point for FAD; sequence AA. Arginine 28 contacts CoA. FAD contacts are provided by residues 39–40 and 46–48; these read EA and HAP. Residues 45 to 49, 66 to 67, and arginine 76 contribute to the CoA site; these read SHAPC and HY. Cysteine 49 acts as the Redox-active in catalysis. Residues valine 86, aspartate 284, and alanine 302 each coordinate FAD. Positions 306 and 362 each coordinate CoA. Tyrosine 426 is a binding site for FAD. 2 residues coordinate CoA: tryptophan 434 and arginine 442.

This sequence belongs to the class-III pyridine nucleotide-disulfide oxidoreductase family. FAD is required as a cofactor.

The enzyme catalyses hydrogen sulfide + NADP(+) = sulfur + NADPH. It catalyses the reaction hydrogen sulfide + NAD(+) = sulfur + NADH. Catalyzes the CoA-dependent reduction of elemental sulfur (S(0)) to produce hydrogen sulfide. The sequence is that of NAD(P)H sulfur oxidoreductase (CoA-dependent) from Pyrococcus abyssi (strain GE5 / Orsay).